Reading from the N-terminus, the 402-residue chain is Phosphoglycerate kinase (402 aa).

Substrate is bound by residues 24-26 (DFN), Arg40, 63-66 (HFGR), Arg122, and Arg155. Residues Lys206, Gly297, Glu328, and 358 to 361 (GGDS) each bind ATP.

It belongs to the phosphoglycerate kinase family. In terms of assembly, monomer.

It is found in the cytoplasm. It catalyses the reaction (2R)-3-phosphoglycerate + ATP = (2R)-3-phospho-glyceroyl phosphate + ADP. The protein operates within carbohydrate degradation; glycolysis; pyruvate from D-glyceraldehyde 3-phosphate: step 2/5. The protein is Phosphoglycerate kinase of Prochlorococcus marinus (strain MIT 9515).